Reading from the N-terminus, the 134-residue chain is Profilin-3 (134 aa).

Cys13 and Cys118 are joined by a disulfide. The Involved in PIP2 interaction motif lies at 84 to 100 (AVIRGKKGSGGITIKKT). The residue at position 114 (Thr114) is a Phosphothreonine.

Belongs to the profilin family. In terms of assembly, occurs in many kinds of cells as a complex with monomeric actin in a 1:1 ratio. Phosphorylated by MAP kinases.

The protein resides in the cytoplasm. The protein localises to the cytoskeleton. Functionally, binds to actin and affects the structure of the cytoskeleton. At high concentrations, profilin prevents the polymerization of actin, whereas it enhances it at low concentrations. By binding to PIP2, it inhibits the formation of IP3 and DG. This chain is Profilin-3 (PRO3), found in Olea europaea (Common olive).